A 511-amino-acid chain; its full sequence is IWS1-like protein (511 aa).

Residues 1 to 200 are disordered; sequence MSDHEEESHG…DDGPVDRHGR (200 aa). 2 stretches are compositionally biased toward low complexity: residues 11–30 and 55–86; these read ASPTSPASSGASSPLAPISP and APASPARDSSAPASPSAASPAGSRSPSPSPVK. Over residues 94–103 the composition is skewed to acidic residues; it reads DSDEDSDAEE. The span at 134–143 shows a compositional bias: basic and acidic residues; the sequence is HEGTSKKEPT. Residues 166 to 179 show a composition bias toward acidic residues; it reads LDEFVEGRDEEESQ. Residues 294–374 form the TFIIS N-terminal domain; that stretch reads SALSEWLAPL…GEWARPIYHL (81 aa). The interval 382-454 is disordered; it reads SRQEREERDY…RARVPKPSTK (73 aa). Composition is skewed to basic and acidic residues over residues 383 to 395 and 414 to 425; these read RQEREERDYSRMP and DQPKRPRIRDAD.

Belongs to the IWS1 family.

It localises to the nucleus. The sequence is that of IWS1-like protein from Caenorhabditis elegans.